Reading from the N-terminus, the 671-residue chain is MTGRLAIEDVRPRIAGGSQPSKAVIGEMIPVSALVWREGHDAVSATLNVISPTGEVTRTTMEPAPFDQDKMFSSFVPDALGTWKFRVDAWSDPMSTWRHAVIAKIEVGQDEDDLFNDLEHGAQLFEKAAENASKPTAQKLFAVADSLRSNQPLRARVAPALSKEIHEILHEHPVRELLTRGQNHTVLVERKKAQFSSWYELFPRSTGGWDTDGNPVHGTFSTTAKALKRVAAMGFDTVYFPPIHPIGEIHRKGKNNSLIAEANDVGSPWAIGSAAGGHDAVHPQLGTLKDFQALVSTAEELGLSVALDLALQAAPDHPWARTHQDFFTVLADGTIAYAENPPKKYQDIYPLNFDNNKSAIYAELKRIVLFWIAQGVTVFRVDNPHTKPANFWEWLISTIHETHPEVIFLAEAFTRPARLYGLGKVGFSQSYTYFTWRTTKSELEEFGTEIAAMADVSRPNLFVNTPDILHESLQHGGRAMFAIRAALAATLSPLWGVYSGFELYENEAVSANSEEYLDSEKYELRPRDFTAALEQGDSLEPYLGTLNAIRRAHPALQQLRVIDFHSTDNENIIAYSKVDPVSGDAILVVINLDPTHAHSATVDLTMNAIGCEDVDHFTVTDLVTGAQFPWNKRTYVRLDPCADVAHILELPVVEESKRKALSWRTPTDYSN.

Alpha-maltose 1-phosphate contacts are provided by lysine 252, glutamine 312, and aspartate 347. Catalysis depends on aspartate 382, which acts as the Nucleophile. Asparagine 383 provides a ligand contact to alpha-maltose 1-phosphate. Glutamate 411 serves as the catalytic Proton donor. Residue 521–522 coordinates alpha-maltose 1-phosphate; sequence KY.

It belongs to the glycosyl hydrolase 13 family. GlgE subfamily. In terms of assembly, homodimer.

It carries out the reaction alpha-maltose 1-phosphate + [(1-&gt;4)-alpha-D-glucosyl](n) = [(1-&gt;4)-alpha-D-glucosyl](n+2) + phosphate. Functionally, maltosyltransferase that uses maltose 1-phosphate (M1P) as the sugar donor to elongate linear or branched alpha-(1-&gt;4)-glucans. Is involved in a branched alpha-glucan biosynthetic pathway from trehalose, together with TreS, Mak and GlgB. This is Alpha-1,4-glucan:maltose-1-phosphate maltosyltransferase from Corynebacterium pseudotuberculosis (strain 1002).